A 424-amino-acid chain; its full sequence is Glutamyl-tRNA reductase (424 aa).

Residues threonine 51 to arginine 54, serine 99, glutamate 104 to glutamine 106, and glutamine 110 each bind substrate. Residue cysteine 52 is the Nucleophile of the active site. Glycine 179–glycine 184 provides a ligand contact to NADP(+).

This sequence belongs to the glutamyl-tRNA reductase family. Homodimer.

It catalyses the reaction (S)-4-amino-5-oxopentanoate + tRNA(Glu) + NADP(+) = L-glutamyl-tRNA(Glu) + NADPH + H(+). Its pathway is porphyrin-containing compound metabolism; protoporphyrin-IX biosynthesis; 5-aminolevulinate from L-glutamyl-tRNA(Glu): step 1/2. Its function is as follows. Catalyzes the NADPH-dependent reduction of glutamyl-tRNA(Glu) to glutamate 1-semialdehyde (GSA). This Methanocorpusculum labreanum (strain ATCC 43576 / DSM 4855 / Z) protein is Glutamyl-tRNA reductase.